A 344-amino-acid chain; its full sequence is Transmembrane protein 268 (344 aa).

The tract at residues 1–31 (MACEPQMDPGGAAGPLPTSSPGWSPLPGGSP) is disordered. A compositionally biased stretch (low complexity) spans 14 to 27 (GPLPTSSPGWSPLP). The next 2 membrane-spanning stretches (helical) occupy residues 106–126 (AFAVVFYVVVWANIYSTSQMF) and 133–153 (AGVLLVTLAATSLTLTLVVIF). Positions 244–266 (TANEGPENLLEETPLLPDRPGST) are disordered. The segment covering 247–259 (EGPENLLEETPLL) has biased composition (low complexity).

As to quaternary structure, interacts with ITGAM; this interaction inhibits ITGAM degradation via the endosome-lysosome pathway. Interacts with ITGB4; this interaction prevents ITGB4 degradation.

Its subcellular location is the cell membrane. In terms of biological role, stabilizes cell surface expression of ITGAM and participates in the adhesion and migration of phagocytes during bacterial clearance. The chain is Transmembrane protein 268 (TMEM268) from Bos taurus (Bovine).